Reading from the N-terminus, the 282-residue chain is MEMO1 family protein Msed_2139 (282 aa).

The protein belongs to the MEMO1 family.

This is MEMO1 family protein Msed_2139 from Metallosphaera sedula (strain ATCC 51363 / DSM 5348 / JCM 9185 / NBRC 15509 / TH2).